A 346-amino-acid chain; its full sequence is MGVDIKELVEPVAKEVELGFFSKKVIAIDAYNSLYQFLATIRQKDGTPLLDAQGNVTSHLNGLFYRTINYIELGIKPVYVFDGRPPELKQKELERRYQIKVEAEKKYREAIERGDLEEARIYAQQTSRLTAAMVHDAKLLLRYMGVPYVEAPSEGEAQAAYMVKKGDAWASGSQDFDSLLFGSPRLVRNLAITGKRKLPRKDVYVEVKPEIVELEELLRVHGITHQQLVVIGILVGTDYAPEGARGIGVKKALKLVKELKDPEKIFRSVEWSSDVPPEKILELFLHPEVTDSYELTWKEPDKEKVIELLVERHQFSMERVTNALDRLEKAVKTHFKQQSLESWFGF.

The segment at 1 to 100 (MGVDIKELVE…KELERRYQIK (100 aa)) is N-domain. The Mg(2+) site is built by D29, D82, E154, E156, D175, D177, and D238. Residues 118-260 (EARIYAQQTS…KALKLVKELK (143 aa)) are I-domain. Residues 336 to 344 (KQQSLESWF) form an interaction with PCNA region.

This sequence belongs to the XPG/RAD2 endonuclease family. FEN1 subfamily. In terms of assembly, interacts with PCNA. PCNA stimulates the nuclease activity without altering cleavage specificity. Mg(2+) is required as a cofactor.

In terms of biological role, structure-specific nuclease with 5'-flap endonuclease and 5'-3' exonuclease activities involved in DNA replication and repair. During DNA replication, cleaves the 5'-overhanging flap structure that is generated by displacement synthesis when DNA polymerase encounters the 5'-end of a downstream Okazaki fragment. Binds the unpaired 3'-DNA end and kinks the DNA to facilitate 5' cleavage specificity. Cleaves one nucleotide into the double-stranded DNA from the junction in flap DNA, leaving a nick for ligation. Also involved in the base excision repair (BER) pathway. Acts as a genome stabilization factor that prevents flaps from equilibrating into structures that lead to duplications and deletions. Also possesses 5'-3' exonuclease activity on nicked or gapped double-stranded DNA. The protein is Flap endonuclease 1 of Thermofilum pendens (strain DSM 2475 / Hrk 5).